The sequence spans 326 residues: Microtubule-associated protein RP/EB family member 2 (326 aa).

Ser9 bears the Phosphoserine mark. Positions Thr56 to Asp158 constitute a Calponin-homology (CH) domain. The residue at position 166 (Tyr166) is a Phosphotyrosine. 2 disordered regions span residues Glu170 to Leu239 and Ala298 to Tyr326. The interval Gln186–Tyr326 is DCTN1-binding. Residues Ser199 to Ser233 are compositionally biased toward low complexity. Phosphoserine is present on residues Ser218 and Ser235. The region spanning Ser235–His305 is the EB1 C-terminal domain. Positions Glu258–Glu301 are APC-binding. Residues Ser299–His316 are compositionally biased toward basic and acidic residues. Residues Glu317–Tyr326 are compositionally biased toward low complexity.

Belongs to the MAPRE family. Interacts with DCTN1. Interacts with APC (via C-terminal). Interacts with monomeric and polymerized tubulin. Interacts with SLAIN1. Interacts (via the N-terminal region) with BAG1. Interacts with ASB14. Interacts with HAX1; this interaction is essential for epidermal cell migration. Phosphorylated at Ser-235 by CK2 leading to enhanced cell adhesion. Phosphorylated by CDK1 and AURKB during mitosis reduces the binding affinity of MAPRE2 for microtubules. In terms of processing, ubiquitinated in an ASB14-dependent manner; leading to proteasomal degradation.

Its subcellular location is the cytoplasm. It is found in the cytoskeleton. Its function is as follows. Adapter protein that is involved in microtubule polymerization, and spindle function by stabilizing microtubules and anchoring them at centrosomes. Therefore, ensures mitotic progression and genome stability. Acts as a central regulator of microtubule reorganization in apico-basal epithelial differentiation. Plays a role during oocyte meiosis by regulating microtubule dynamics. Participates in neurite growth by interacting with plexin B3/PLXNB3 and microtubule reorganization during apico-basal epithelial differentiation. Also plays an essential role for cell migration and focal adhesion dynamics. Mechanistically, recruits HAX1 to microtubules in order to regulate focal adhesion dynamics. The chain is Microtubule-associated protein RP/EB family member 2 (MAPRE2) from Bos taurus (Bovine).